The chain runs to 389 residues: PqqA peptide cyclase (389 aa).

The Radical SAM core domain occupies 19–234 (VGLPLWLLAE…TNEYRARLEA (216 aa)). [4Fe-4S] cluster is bound by residues cysteine 33, cysteine 37, and cysteine 40.

This sequence belongs to the radical SAM superfamily. PqqE family. Interacts with PqqD. The interaction is necessary for activity of PqqE. [4Fe-4S] cluster serves as cofactor.

It carries out the reaction [PQQ precursor protein] + S-adenosyl-L-methionine = E-Y cross-linked-[PQQ precursor protein] + 5'-deoxyadenosine + L-methionine + H(+). The protein operates within cofactor biosynthesis; pyrroloquinoline quinone biosynthesis. Its function is as follows. Catalyzes the cross-linking of a glutamate residue and a tyrosine residue in the PqqA protein as part of the biosynthesis of pyrroloquinoline quinone (PQQ). The chain is PqqA peptide cyclase from Pseudomonas syringae pv. syringae (strain B728a).